The sequence spans 215 residues: Peroxiredoxin 1 (215 aa).

The 157-residue stretch at 1 to 157 folds into the Thioredoxin domain; that stretch reads MKLYQKFPET…LLRITKAALV (157 aa). Cys45 serves as the catalytic Cysteine sulfenic acid (-SOH) intermediate. A substrate-binding site is contributed by Arg120.

The protein belongs to the peroxiredoxin family. Prx6 subfamily. As to quaternary structure, homodecamer. Pentamer of dimers that assemble into a ring structure.

It is found in the cytoplasm. The catalysed reaction is a hydroperoxide + [thioredoxin]-dithiol = an alcohol + [thioredoxin]-disulfide + H2O. Functionally, thiol-specific peroxidase that catalyzes the reduction of hydrogen peroxide and organic hydroperoxides to water and alcohols, respectively. Plays a role in cell protection against oxidative stress by detoxifying peroxides. In Sulfuracidifex metallicus (Sulfolobus metallicus), this protein is Peroxiredoxin 1.